We begin with the raw amino-acid sequence, 461 residues long: 23S rRNA (uracil(1939)-C(5))-methyltransferase RlmD (461 aa).

The tract at residues 1–26 is disordered; the sequence is MAKHERGLRFQPTGGSKAPQIPTGKK. The region spanning 20-78 is the TRAM domain; the sequence is QIPTGKKQRLSIERLANDGRGIAFFEGKTWFVLGALAGEEVEARVLGAHGKVVEARTER. Cys91, Cys97, Cys100, and Cys179 together coordinate [4Fe-4S] cluster. S-adenosyl-L-methionine contacts are provided by Gln283, Phe312, Asn317, Glu333, Asp360, and Asp381. Residue Cys407 is the Nucleophile of the active site.

This sequence belongs to the class I-like SAM-binding methyltransferase superfamily. RNA M5U methyltransferase family. RlmD subfamily.

The catalysed reaction is uridine(1939) in 23S rRNA + S-adenosyl-L-methionine = 5-methyluridine(1939) in 23S rRNA + S-adenosyl-L-homocysteine + H(+). In terms of biological role, catalyzes the formation of 5-methyl-uridine at position 1939 (m5U1939) in 23S rRNA. This Pseudomonas fluorescens (strain Pf0-1) protein is 23S rRNA (uracil(1939)-C(5))-methyltransferase RlmD.